A 368-amino-acid chain; its full sequence is G-protein coupled receptor 62 (368 aa).

At 1–18 (MANSTGLNASEVAGSLGL) the chain is on the extracellular side. 2 N-linked (GlcNAc...) asparagine glycosylation sites follow: Asn-3 and Asn-8. A helical transmembrane segment spans residues 19–39 (ILAAVVEVGALLGNGALLVVV). At 40-53 (LRTPGLRDALYLAH) the chain is on the cytoplasmic side. Residues 54–74 (LCVVDLLAAASIMPLGLLAAP) form a helical membrane-spanning segment. Topologically, residues 75–91 (PPGLGRVRLGPAPCRAA) are extracellular. A helical membrane pass occupies residues 92 to 112 (RFLSAALLPACTLGVAALGLA). Over 113–129 (RYRLIVHPLRPGSRPPP) the chain is Cytoplasmic. A helical membrane pass occupies residues 130–150 (VLVLTAVWAAAGLLGALSLLG). The Extracellular segment spans residues 151 to 177 (TPPAPPPAPARCSVLAGGLGPFRPLWA). A helical transmembrane segment spans residues 178–198 (LLAFALPALLLLGAYGGIFVV). At 199–239 (ARRAALRPPRPARGSRLHSDSLDSRLSILPPLRPRLPGGKA) the chain is on the cytoplasmic side. Residues 240–260 (ALAPALAVGQFAACWLPYGCA) form a helical membrane-spanning segment. Topologically, residues 261–272 (CLAPAARAAEAE) are extracellular. The helical transmembrane segment at 273–293 (AAVTWVAYSAFAAHPFLYGLL) threads the bilayer. Residues 294-368 (QRPVRLALGR…YQGPPESSLS (75 aa)) are Cytoplasmic-facing. The tract at residues 332-368 (RPPEGPAVGPSEAPEQTPELAGGRSPAYQGPPESSLS) is disordered.

Belongs to the G-protein coupled receptor 1 family. Homodimers. Forms heterodimer with MTNR1B. Interacts with ARRB1 and ARRB2 in a spontaneous and agonist-independent manner; leading to the internalization of GPR62 in the endosomal compartment. Expressed in brain; detected in the basal forebrain, frontal cortex, caudate, putamen, thalamus and hippocampus.

The protein resides in the cell membrane. The protein localises to the endosome membrane. Its function is as follows. Orphan G-protein coupled receptor. Constitutively activates the G(q/11)/inositol phosphate and the G(s)-alpha/cAMP signaling pathways. Has spontaneous activity for beta-arrestin recruitment. Shows a reciprocal modulation of signaling functions with the melatonin receptor MTNR1B most likely through receptor heteromerization. This chain is G-protein coupled receptor 62 (GPR62), found in Homo sapiens (Human).